A 914-amino-acid chain; its full sequence is Alanine--tRNA ligase (914 aa).

Zn(2+) contacts are provided by His-608, His-612, Cys-711, and His-715.

It belongs to the class-II aminoacyl-tRNA synthetase family. Requires Zn(2+) as cofactor.

The protein localises to the cytoplasm. The enzyme catalyses tRNA(Ala) + L-alanine + ATP = L-alanyl-tRNA(Ala) + AMP + diphosphate. Catalyzes the attachment of alanine to tRNA(Ala) in a two-step reaction: alanine is first activated by ATP to form Ala-AMP and then transferred to the acceptor end of tRNA(Ala). Also edits incorrectly charged Ser-tRNA(Ala) and Gly-tRNA(Ala) via its editing domain. The sequence is that of Alanine--tRNA ligase from Methanoregula boonei (strain DSM 21154 / JCM 14090 / 6A8).